The primary structure comprises 189 residues: MyoD family inhibitor domain-containing protein 2 (189 aa).

Residues 28–188 enclose the MDFI domain; sequence KEDTQLTNAK…LAMEISEICY (161 aa).

It belongs to the MDFI family.

The sequence is that of MyoD family inhibitor domain-containing protein 2 from Homo sapiens (Human).